The sequence spans 451 residues: Sex peptide receptor-related protein 2 (451 aa).

Over 1–63 (MNYEVYCGNA…DNLEIVVYGQ (63 aa)) the chain is Extracellular. The N-linked (GlcNAc...) asparagine glycan is linked to Asn15. A helical transmembrane segment spans residues 64–84 (IFPILVLFAVFANAAVALVLS). Over 85 to 97 (KKHMITPTNVVLK) the chain is Cytoplasmic. Residues 98 to 118 (YMAIAELLVGLVPLPWTLFFF) traverse the membrane as a helical segment. Topologically, residues 119 to 140 (SMGNIKETHRLELWWCYLQKYS) are extracellular. Cys134 and Cys225 are oxidised to a cystine. The chain crosses the membrane as a helical span at residues 141 to 161 (MDAFPPVFHMIAMWLTVLLAA). Residues 162–183 (QRYVSISHPLHSRSACNVKNVR) lie on the Cytoplasmic side of the membrane. A helical transmembrane segment spans residues 184–204 (LATMIITVTSFLCGLPKSFDY). Over 205–251 (EYETVHGWIYSHGNWTYASSCVMMPTAILTNMGQTVYFNIYFWTRAL) the chain is Extracellular. An N-linked (GlcNAc...) asparagine glycan is attached at Asn218. The chain crosses the membrane as a helical span at residues 252–272 (GFIILPSFLLVLLNGLLIKGI). The Cytoplasmic segment spans residues 273–301 (RRAQRRKLRLLREKRSEEAARQRDSNSTS). The helical transmembrane segment at 302–322 (LMLVAIVSIFLIVNLPQAIFM) threads the bilayer. Over 323–334 (GLLCVCETFTIK) the chain is Extracellular. Residues 335-355 (IPILEGTFPAVFLIASNMIVI) traverse the membrane as a helical segment. The Cytoplasmic portion of the chain corresponds to 356-451 (ATYPINFGIY…TQFTTMDRSD (96 aa)).

The protein belongs to the G-protein coupled receptor 1 family. Expressed in head neurons including the ASE sensory neurons and the ASI and AWB chemosensory neurons, the midbody neurons SDQ, and motor neurons in the tail.

Its subcellular location is the cell membrane. G-protein coupled receptor for the neuropeptide like protein nlp-38. Plays a role in several types of aversive gustatory associative learning including gustatory plasticity and salt avoidance learning. Its role in salt avoidance learning may be through activation of the transcription factor crh-1/CREB and de novo transcription and translation, which in turn promotes the formation of long-term memory. The protein is Sex peptide receptor-related protein 2 of Caenorhabditis elegans.